A 330-amino-acid polypeptide reads, in one-letter code: AH receptor-interacting protein (330 aa).

Ser-43 carries the post-translational modification Phosphoserine. The 93-residue stretch at 54 to 146 folds into the PPIase FKBP-type domain; the sequence is RVRGKPMELI…DLDALQQNPQ (93 aa). TPR repeat units follow at residues 179–212, 231–264, and 265–298; these read VPVI…LKNL, TPLL…YDDN, and VKAY…DPAM.

In terms of assembly, interacts with RET in the pituitary gland; this interaction prevents the formation of the AIP-survivin complex.

It is found in the cytoplasm. In terms of biological role, may play a positive role in AHR-mediated (aromatic hydrocarbon receptor) signaling, possibly by influencing its receptivity for ligand and/or its nuclear targeting. The polypeptide is AH receptor-interacting protein (AIP) (Bos taurus (Bovine)).